The sequence spans 923 residues: ATP-dependent Clp protease ATP-binding subunit ClpA homolog CD4B, chloroplastic (923 aa).

The Clp R domain maps to 92 to 234 (FERFTEKAIK…RTQVIRMVGE (143 aa)). Repeat stretches follow at residues 95–160 (FTEK…IGRG) and 170–234 (FTPR…MVGE). Residues 255 to 502 (LEEYGTNLTK…RVRLRHAQLP (248 aa)) form an i region. 300–307 (GEPGVGKT) lines the ATP pocket. The 36-residue stretch at 509–544 (EKELRQITKEKNEAVRGQDFEKAGELRDREMDLKAQ) folds into the UVR domain. The interval 569–760 (VTEADIQHIV…LLIMTSNVGS (192 aa)) is II. An ATP-binding site is contributed by 643–650 (GPTGVGKS).

Belongs to the ClpA/ClpB family.

The protein resides in the plastid. It is found in the chloroplast. Its function is as follows. May interact with a ClpP-like protease involved in degradation of denatured proteins in the chloroplast. This Solanum lycopersicum (Tomato) protein is ATP-dependent Clp protease ATP-binding subunit ClpA homolog CD4B, chloroplastic (CD4B).